A 255-amino-acid chain; its full sequence is Triosephosphate isomerase (255 aa).

A substrate-binding site is contributed by 9–11 (NWK). H95 (electrophile) is an active-site residue. Residue E167 is the Proton acceptor of the active site. Substrate contacts are provided by residues G173, S212, and 233-234 (GG).

It belongs to the triosephosphate isomerase family. As to quaternary structure, homodimer.

The protein resides in the cytoplasm. The catalysed reaction is D-glyceraldehyde 3-phosphate = dihydroxyacetone phosphate. Its pathway is carbohydrate biosynthesis; gluconeogenesis. It participates in carbohydrate degradation; glycolysis; D-glyceraldehyde 3-phosphate from glycerone phosphate: step 1/1. Its function is as follows. Involved in the gluconeogenesis. Catalyzes stereospecifically the conversion of dihydroxyacetone phosphate (DHAP) to D-glyceraldehyde-3-phosphate (G3P). The chain is Triosephosphate isomerase from Erwinia tasmaniensis (strain DSM 17950 / CFBP 7177 / CIP 109463 / NCPPB 4357 / Et1/99).